Consider the following 319-residue polypeptide: Guanosine ABC transporter permease protein NupQ (319 aa).

Helical transmembrane passes span 6 to 26, 39 to 59, 65 to 85, 99 to 119, 159 to 179, 204 to 224, 235 to 255, 257 to 277, and 282 to 302; these read ILSI…LTAL, IGLE…NLFF, AAAP…FSLI, VSGV…VKLI, ILAI…PFGL, IGVM…ASTI, GQGF…IGAL, AALF…LPLF, and NVYM…GFIG.

It belongs to the binding-protein-dependent transport system permease family. The complex is composed of two ATP-binding proteins (NupO), two transmembrane proteins (NupP and NupQ) and a solute-binding protein (NupN).

Its subcellular location is the cell membrane. Functionally, part of an ABC transporter complex involved in the uptake of guanosine. Responsible for the translocation of the substrate across the membrane. May be a nucleoside transporter of broad specificity but with various affinities for different substrates. This is Guanosine ABC transporter permease protein NupQ from Bacillus subtilis (strain 168).